A 137-amino-acid polypeptide reads, in one-letter code: Phospholipase A2 group V (137 aa).

Residues 1–20 form the signal peptide; it reads MKRLLTLAWFLACSVPAVPG. 6 disulfides stabilise this stretch: Cys46–Cys137, Cys48–Cys64, Cys63–Cys117, Cys70–Cys110, Cys79–Cys103, and Cys97–Cys108. Residues Tyr47, Gly49, and Gly51 each coordinate Ca(2+). His67 is a catalytic residue. Asp68 contacts Ca(2+). Asp111 is an active-site residue.

The protein belongs to the phospholipase A2 family. The cofactor is Ca(2+). Post-translationally, this enzyme lacks one of the seven disulfide bonds found in similar PA2 proteins.

The protein localises to the secreted. It is found in the cell membrane. Its subcellular location is the cytoplasmic vesicle. The protein resides in the phagosome. It localises to the recycling endosome. The protein localises to the golgi apparatus. It is found in the cis-Golgi network. Its subcellular location is the trans-Golgi network. It catalyses the reaction a 1,2-diacyl-sn-glycero-3-phosphocholine + H2O = a 1-acyl-sn-glycero-3-phosphocholine + a fatty acid + H(+). The catalysed reaction is 1-hexadecanoyl-2-(9Z-octadecenoyl)-sn-glycero-3-phosphocholine + H2O = 1-hexadecanoyl-sn-glycero-3-phosphocholine + (9Z)-octadecenoate + H(+). The enzyme catalyses 1-hexadecanoyl-2-(5Z,8Z,11Z,14Z-eicosatetraenoyl)-sn-glycero-3-phosphocholine + H2O = 1-hexadecanoyl-sn-glycero-3-phosphocholine + (5Z,8Z,11Z,14Z)-eicosatetraenoate + H(+). It carries out the reaction 1-hexadecanoyl-2-(9Z,12Z-octadecadienoyl)-sn-glycero-3-phosphoethanolamine + H2O = 1-hexadecanoyl-sn-glycero-3-phosphoethanolamine + (9Z,12Z)-octadecadienoate + H(+). It catalyses the reaction 1-hexadecanoyl-2-(5Z,8Z,11Z,14Z-eicosatetraenoyl)-sn-glycero-3-phosphoethanolamine + H2O = 1-hexadecanoyl-sn-glycero-3-phosphoethanolamine + (5Z,8Z,11Z,14Z)-eicosatetraenoate + H(+). The catalysed reaction is 1-octadecanoyl-2-(5Z,8Z,11Z,14Z-eicosatetraenoyl)-sn-glycero-3-phospho-(1D-myo-inositol) + H2O = 1-octadecanoyl-sn-glycero-3-phospho-(1D-myo-inositol) + (5Z,8Z,11Z,14Z)-eicosatetraenoate + H(+). The enzyme catalyses 1-hexadecanoyl-2-(9Z-octadecenoyl)-sn-glycero-3-phosphoglycerol + H2O = 1-hexadecanoyl-sn-glycero-3-phosphoglycerol + (9Z)-octadecenoate + H(+). It carries out the reaction N-hexadecanoyl-1,2-di-(9Z-octadecenoyl)-sn-glycero-3-phosphoethanolamine + H2O = N-hexadecanoyl-1-(9Z-octadecenoyl)-sn-glycero-3-phosphoethanolamine + (9Z)-octadecenoate + H(+). It catalyses the reaction 1'-[1,2-di-(9Z-octadecenoyl)-sn-glycero-3-phospho]-3'-[1-(9Z-octadecenoyl)-sn-glycero-3-phospho]-glycerol + H2O = 1',3'-bis-[1-(9Z-octadecenoyl)-sn-glycero-3-phospho]-glycerol + (9Z)-octadecenoate + H(+). The catalysed reaction is 1',3'-bis[1,2-di-(9Z-octadecenoyl)-sn-glycero-3-phospho]-glycerol + H2O = 1'-[1,2-di-(9Z-octadecenoyl)-sn-glycero-3-phospho]-3'-[1-(9Z-octadecenoyl)-sn-glycero-3-phospho]-glycerol + (9Z)-octadecenoate + H(+). Its pathway is lipid metabolism; phospholipid metabolism. It functions in the pathway lipid metabolism; leukotriene B4 biosynthesis. The protein operates within lipid metabolism; leukotriene C4 biosynthesis. Functionally, secretory calcium-dependent phospholipase A2 that primarily targets extracellular phospholipids. Hydrolyzes the ester bond of the fatty acyl group attached at sn-2 position of phospholipids (phospholipase A2 activity), preferentially releasing fatty acyl groups with a low degree of unsaturation such as oleoyl (C18:1) and linoleoyl (C18:2) groups. Hydrolyzes low-density lipoprotein (LDL) phospholipids releasing unsaturated fatty acids that drive macrophage polarization toward an M2 phenotype. May act in an autocrine and paracrine manner. Contributes to lipid remodeling of cellular membranes at different subcellular locations and generation of lipid mediators involved in pathogen clearance. Cleaves sn-2 fatty acyl chains of cardiolipin, a major component of the inner membrane of mitochondria and bacterial membranes. Promotes phagocytosis of bacteria in macrophages through production of lysophosphatidylethanolamines. Displays bactericidal activity against Gram-positive bacteria by directly hydrolyzing phospholipids of the bacterial membrane. Promotes phagocytosis and killing of ingested fungi likely through controlling phagosome-lysosome fusion and phagosome maturation. Plays a role in biosynthesis of cysteinyl leukotrienes (CysLTs) in myeloid cells. In eosinophils, triggers perinuclear arachidonate release and LTC4 synthesis in a PLA2G4A-independent way. In neutrophils, amplifies CysLTs biosynthesis initiated by PLA2G4A. Promotes immune complex clearance in macrophages via stimulating synthesis of CysLTs, which act through CYSLTR1 to trigger phagocytosis. May regulate antigen processing in antigen-presenting cells. In pulmonary macrophages regulates IL33 production required for activation of group 2 innate lymphoid cells. May play a role in the biosynthesis of N-acyl ethanolamines that regulate energy metabolism. Hydrolyzes N-acyl phosphatidylethanolamines to N-acyl lysophosphatidylethanolamines, which are further cleaved by a lysophospholipase D to release N-acyl ethanolamines. The chain is Phospholipase A2 group V (Pla2g5) from Rattus norvegicus (Rat).